The primary structure comprises 172 residues: Diphosphoinositol polyphosphate phosphohydrolase 1 (172 aa).

Met1 is subject to N-acetylmethionine. Substrate is bound by residues Arg10, 18-20 (KKR), and 39-41 (SSR). Positions 17–142 (YKKRAACLCF…KPVQASYFET (126 aa)) constitute a Nudix hydrolase domain. Mg(2+) is bound by residues Gly50 and Glu66. Residues 51–72 (GGMEPEEEPSVAAVREVCEEAG) carry the Nudix box motif. Glu69 acts as the Proton acceptor in catalysis. A Mg(2+)-binding site is contributed by Glu70. Residues 89-91 (RKH), Arg115, and Lys133 each bind substrate.

This sequence belongs to the Nudix hydrolase family. DIPP subfamily. Monomer. Mg(2+) is required as a cofactor. The cofactor is Mn(2+). Requires Zn(2+) as cofactor. In terms of tissue distribution, widely expressed. Expressed at higher level in brain, heart, pancreas and liver. Also expressed in placenta, lung and kidney.

It localises to the cytoplasm. The protein localises to the nucleus. It carries out the reaction diphospho-myo-inositol polyphosphate + H2O = myo-inositol polyphosphate + phosphate.. It catalyses the reaction 5-diphospho-1D-myo-inositol 1,2,3,4,6-pentakisphosphate + H2O = 1D-myo-inositol hexakisphosphate + phosphate + H(+). The enzyme catalyses 3,5-bis(diphospho)-1D-myo-inositol 1,2,4,6-tetrakisphosphate + H2O = 3-diphospho-1D-myo-inositol 1,2,4,5,6-pentakisphosphate + phosphate + 2 H(+). The catalysed reaction is [phosphate](n+1) + n H2O = (n+1) phosphate + n H(+). It carries out the reaction P(1),P(5)-bis(5'-adenosyl) pentaphosphate + H2O = ADP + ATP + 2 H(+). It catalyses the reaction P(1),P(6)-bis(5'-adenosyl) hexaphosphate + H2O = 2 ATP + 2 H(+). The enzyme catalyses P(1),P(4)-bis(5'-adenosyl) tetraphosphate + H2O = AMP + ATP + 2 H(+). The catalysed reaction is a 5'-end (N(7)-methyl 5'-triphosphoguanosine)-ribonucleoside in mRNA + H2O = N(7)-methyl-GMP + a 5'-end diphospho-ribonucleoside in mRNA + 2 H(+). It carries out the reaction a 5'-end (N(7)-methyl 5'-triphosphoguanosine)-ribonucleoside in mRNA + H2O = N(7)-methyl-GDP + a 5'-end phospho-ribonucleoside in mRNA + 2 H(+). Its activity is regulated as follows. Endopolyphospahatase activity is inhibited by NaF, NaPPi, beta-glycerol phosphate and heparin. 5-diphosphoinositol pentakisphosphate (5-InsP7) inhibits its mRNA decapping activity. Its function is as follows. Cleaves a beta-phosphate from the diphosphate groups in PP-InsP5 (diphosphoinositol pentakisphosphate) and [PP]2-InsP4 (bisdiphosphoinositol tetrakisphosphate), suggesting that it may play a role in signal transduction. InsP6 (inositol hexakisphosphate) is not a substrate. Acts as a negative regulator of the ERK1/2 pathway. Also able to catalyze the hydrolysis of dinucleoside oligophosphates, with diadenosine 5',5'''-P1,P6-hexaphosphate (Ap6A) and diadenosine 5',5'''- P1,P5-pentaphosphate (Ap5A) being the preferred substrates. The major reaction products are ADP and p4a from Ap6A and ADP and ATP from Ap5A. Also able to hydrolyze 5-phosphoribose 1-diphosphate. Acts as a decapping enzyme that modulates the stability of a subset of mRNAs implicated in cell motility. Hydrolyzes monomethylated capped RNA after both the alpha- and beta-phosphates generating m7GMP + ppRNA and m7GDP + pRNA. Can hydrolyze unmethylated capped RNAs. Divalent cations zinc, magnesium and manganese determine its substrate specificity. Exhibits diphosphoinositol polyphosphate phosphohydrolase in the presence of magnesium ions, diadenosine hexaphosphate hydrolase activity in the presence of manganese ions and endopolyphosphatase activity in the presence of zinc ions. Plays an important role in limiting DNA damage and maintaining cell survival upon oxidative stress via its endopolyphosphatase activity. This chain is Diphosphoinositol polyphosphate phosphohydrolase 1, found in Homo sapiens (Human).